We begin with the raw amino-acid sequence, 65 residues long: UPF0434 protein HSM_0997 (65 aa).

It belongs to the UPF0434 family.

In Histophilus somni (strain 2336) (Haemophilus somnus), this protein is UPF0434 protein HSM_0997.